We begin with the raw amino-acid sequence, 257 residues long: Sad1-interacting factor 1 (257 aa).

Positions 16 to 68 are disordered; that stretch reads LNKIKQGGASRINQILGQNSDDSQSDVRATASEEAVHSETATPVTPMSSGFME. Polar residues-rich tracts occupy residues 26 to 37 and 54 to 63; these read RINQILGQNSDD and ETATPVTPMS. Phosphoserine is present on Ser-35. Phosphoserine is present on Ser-132. A Phosphothreonine modification is found at Thr-134. The next 2 helical transmembrane spans lie at 160–180 and 231–251; these read LLAISIVVIVCYFKHLPLLPW and FTQLITDACMTIFALGLCCYF.

Interacts with kms1 and sad1.

The protein resides in the membrane. The protein is Sad1-interacting factor 1 (sif1) of Schizosaccharomyces pombe (strain 972 / ATCC 24843) (Fission yeast).